We begin with the raw amino-acid sequence, 327 residues long: Voltage-dependent calcium channel gamma-4 subunit (327 aa).

The Cytoplasmic segment spans residues 1–9 (MVRCDRGLQ). Residues 10–30 (MLLTTAGAFAAFSLMAIAIGT) traverse the membrane as a helical segment. At 31–107 (DYWLYSSAHI…EYLLRIVRAS (77 aa)) the chain is on the extracellular side. N-linked (GlcNAc...) asparagine glycosylation is found at asparagine 42 and asparagine 45. A helical transmembrane segment spans residues 108–128 (SVFPILSTILLLLGGLCIGAG). The Cytoplasmic portion of the chain corresponds to 129-136 (RIYSRKNN). Residues 137 to 157 (IVLSAGILFVAAGLSNIIGII) traverse the membrane as a helical segment. Over 158-186 (VYISSNTGDPSDKRDEDKKNHYNYGWSFY) the chain is Extracellular. A helical transmembrane segment spans residues 187–207 (FGALSFIVAETVGVLAVNIYI). Over 208 to 327 (EKNKELRFKT…SMLNRRTTPV (120 aa)) the chain is Cytoplasmic. Positions 235–261 (SYRYRRRRSRSSSRSTEASPSRDVSPM) are disordered. The segment covering 246–256 (SSRSTEASPSR) has biased composition (low complexity). At serine 259 the chain carries Phosphoserine.

The protein belongs to the PMP-22/EMP/MP20 family. CACNG subfamily. In terms of assembly, interacts with CACNA1C. Identified in a complex with the L-type calcium channel subunits CACNA1C, CACNA2D1 and either CACNB1 or CACNB2. Acts as an auxiliary subunit for AMPA-selective glutamate receptors (AMPARs). Interacts with GRIA1. As to expression, detected in heart left ventricle.

The protein resides in the cell membrane. Functionally, regulates the activity of L-type calcium channels that contain CACNA1C as pore-forming subunit. Regulates the trafficking and gating properties of AMPA-selective glutamate receptors (AMPARs), including GRIA1 and GRIA4. Promotes their targeting to the cell membrane and synapses and modulates their gating properties by slowing their rates of activation, deactivation and desensitization and by mediating their resensitization. In Homo sapiens (Human), this protein is Voltage-dependent calcium channel gamma-4 subunit (CACNG4).